The chain runs to 164 residues: Phosphopantetheine adenylyltransferase (164 aa).

Ser-10 contributes to the substrate binding site. Residues 10–11 (SF) and His-18 each bind ATP. Substrate contacts are provided by Lys-42, Thr-79, and Arg-93. Residues 94–96 (GLR), Glu-104, and 129–135 (VRPIAAT) contribute to the ATP site.

It belongs to the bacterial CoaD family. Homohexamer. It depends on Mg(2+) as a cofactor.

It localises to the cytoplasm. It catalyses the reaction (R)-4'-phosphopantetheine + ATP + H(+) = 3'-dephospho-CoA + diphosphate. It participates in cofactor biosynthesis; coenzyme A biosynthesis; CoA from (R)-pantothenate: step 4/5. Functionally, reversibly transfers an adenylyl group from ATP to 4'-phosphopantetheine, yielding dephospho-CoA (dPCoA) and pyrophosphate. This Bradyrhizobium sp. (strain BTAi1 / ATCC BAA-1182) protein is Phosphopantetheine adenylyltransferase.